Reading from the N-terminus, the 611-residue chain is MAU2 chromatid cohesion factor homolog (611 aa).

TPR repeat units lie at residues 11–46, 91–124, 131–164, 371–404, and 490–523; these read YAGL…NPPP, FEAS…TSGE, FRLF…AEQC, PILH…ADNP, and ACSL…SGKI. The segment at 581–611 is disordered; the sequence is WTGAVSPTKSSTIPPQQSFQTWSQPGPSRLS. The span at 585–611 shows a compositional bias: polar residues; the sequence is VSPTKSSTIPPQQSFQTWSQPGPSRLS.

It belongs to the SCC4/mau-2 family. As to quaternary structure, component of the cohesin loading complex.

It is found in the nucleus. It localises to the nucleoplasm. Its function is as follows. Required for association of the cohesin complex with chromatin during interphase. Plays a role in sister chromatid cohesion and normal progression through prometaphase. The sequence is that of MAU2 chromatid cohesion factor homolog from Nematostella vectensis (Starlet sea anemone).